Reading from the N-terminus, the 195-residue chain is Glycerol-3-phosphate acyltransferase 1 (195 aa).

A run of 5 helical transmembrane segments spans residues 6–26 (VILT…GHFL), 52–72 (LGIA…FLVV), 74–94 (LGLK…AVAG), 117–137 (LAVY…LTFL), and 168–188 (FGLG…ISLF).

It belongs to the PlsY family. In terms of assembly, probably interacts with PlsX.

It localises to the cell membrane. It catalyses the reaction an acyl phosphate + sn-glycerol 3-phosphate = a 1-acyl-sn-glycero-3-phosphate + phosphate. The protein operates within lipid metabolism; phospholipid metabolism. In terms of biological role, catalyzes the transfer of an acyl group from acyl-phosphate (acyl-PO(4)) to glycerol-3-phosphate (G3P) to form lysophosphatidic acid (LPA). This enzyme utilizes acyl-phosphate as fatty acyl donor, but not acyl-CoA or acyl-ACP. The sequence is that of Glycerol-3-phosphate acyltransferase 1 from Moorella thermoacetica (strain ATCC 39073 / JCM 9320).